A 313-amino-acid chain; its full sequence is Dioxygenase swnH2 (313 aa).

Residues His-155, Asp-157, and His-232 each contribute to the Fe cation site.

This sequence belongs to the PhyH family. As to quaternary structure, homodimer. The cofactor is Fe cation.

It participates in mycotoxin biosynthesis. Functionally, aminotransferase; part of the gene cluster that mediates the biosynthesis of swainsonine (SW), a cytotoxic fungal alkaloid and a potential cancer therapy drug. Swainsonine production occurs via a multibranched pathway and is dispensable for fungal colonization of plants and infection of insect hosts. The first step of swainsonine biosynthesis is the production of the precursor pipecolic acid (PA) via conversion of L-lysine (Lys) to 1-piperideine-6-carboxylate (P6C) by the aminotransferase swnA, the latter being further reduced to PA by the reductase swnR. The PKS-NRPS hybrid synthetase swnK uptakes and condensates PA and malonyl-CoA with and without skipping of the ketoreductase (KR) domain in order to produce 3 intermediates, 1-oxoindolizidine, (1S)-1-hydroxyindolizin, and (1R)-1-hydroxyindolizine; with the transisomer (1S)-1-hydroxyindolizin being predominant. The terminal thioester reductase (TE) domain of swnK is involved in reduction of the thioester bond to release the intermediate aldehydes. The oxidoreductase swnN could contribute to the reduction of 1-oxoindolizidine to (1S)-1-hydroxyindolizin and (1R)-1-hydroxyindolizine, contributing to the major route of SW production. The dioxygenase swnH2 would be responsible for the oxidization of (1R)-1-hydroxyindolizine into (1R,2S)-1,2-dihydroxyindolizine and of (1S)-1-hydroxyindolizin to yield both (1R,2S)-1,2-dihydroxyindolizine and (1S,2S)-1,2-dihydroxyindolizine. The dioxygenase swnH1 then performs the conversion of the 1,2-dihydroxyindolizine epimers to SW. The polypeptide is Dioxygenase swnH2 (Arthroderma benhamiae (strain ATCC MYA-4681 / CBS 112371) (Trichophyton mentagrophytes)).